The following is a 383-amino-acid chain: Succinyl-diaminopimelate desuccinylase (383 aa).

A Zn(2+)-binding site is contributed by histidine 74. Aspartate 76 is a catalytic residue. Aspartate 107 contributes to the Zn(2+) binding site. The active-site Proton acceptor is glutamate 141. Glutamate 142, glutamate 170, and histidine 356 together coordinate Zn(2+).

This sequence belongs to the peptidase M20A family. DapE subfamily. As to quaternary structure, homodimer. Zn(2+) is required as a cofactor. The cofactor is Co(2+).

It carries out the reaction N-succinyl-(2S,6S)-2,6-diaminopimelate + H2O = (2S,6S)-2,6-diaminopimelate + succinate. Its pathway is amino-acid biosynthesis; L-lysine biosynthesis via DAP pathway; LL-2,6-diaminopimelate from (S)-tetrahydrodipicolinate (succinylase route): step 3/3. Catalyzes the hydrolysis of N-succinyl-L,L-diaminopimelic acid (SDAP), forming succinate and LL-2,6-diaminopimelate (DAP), an intermediate involved in the bacterial biosynthesis of lysine and meso-diaminopimelic acid, an essential component of bacterial cell walls. This chain is Succinyl-diaminopimelate desuccinylase, found in Cupriavidus pinatubonensis (strain JMP 134 / LMG 1197) (Cupriavidus necator (strain JMP 134)).